Consider the following 280-residue polypeptide: MKKEKLRTENISFQYPGAATYALKDVSFSLFEGEWVSVIGQNGSGKSTLAKLLNGLFLPEAGTITVNDTMILSEETVWDVRKQIGMVFQNPDNQFVGTTVQDDVVFGLENIGMPREQMVERLNQALRLVRMEDFLNDEPHSLSGGQKQRVAIAGVLALQPSILILDEATSMLDPQGRREVVETVRQLVNEKGITVLSITHDLEEAAQSDRVIILNKGEILEEGIPEQIFKSSHMLQEIGLDVPFSVKIAELLKRNEILLQNTHLTMESLVNELWRLHSKK.

The ABC transporter domain maps to 6 to 241; that stretch reads LRTENISFQY…SHMLQEIGLD (236 aa). An ATP-binding site is contributed by 40 to 47; it reads GQNGSGKS.

This sequence belongs to the ABC transporter superfamily. Energy-coupling factor EcfA family. As to quaternary structure, forms a stable energy-coupling factor (ECF) transporter complex composed of 2 membrane-embedded substrate-binding proteins (S component), 2 ATP-binding proteins (A component) and 2 transmembrane proteins (T component).

The protein resides in the cell membrane. Its function is as follows. ATP-binding (A) component of a common energy-coupling factor (ECF) ABC-transporter complex. Unlike classic ABC transporters this ECF transporter provides the energy necessary to transport a number of different substrates. This is Energy-coupling factor transporter ATP-binding protein EcfA1 from Bacillus cereus (strain ZK / E33L).